Here is a 465-residue protein sequence, read N- to C-terminus: Cysteine--tRNA ligase (465 aa).

Cysteine 27 is a binding site for Zn(2+). A 'HIGH' region motif is present at residues 29-39; it reads PTVYDDAHLGH. Zn(2+) is bound by residues cysteine 207, histidine 237, and glutamate 241. The 'KMSKS' region signature appears at 269-273; that stretch reads KMSKS. ATP is bound at residue lysine 272.

The protein belongs to the class-I aminoacyl-tRNA synthetase family. Monomer. The cofactor is Zn(2+).

It is found in the cytoplasm. The enzyme catalyses tRNA(Cys) + L-cysteine + ATP = L-cysteinyl-tRNA(Cys) + AMP + diphosphate. In Helicobacter pylori (strain P12), this protein is Cysteine--tRNA ligase.